The primary structure comprises 300 residues: 4-hydroxy-tetrahydrodipicolinate synthase (300 aa).

T46 contacts pyruvate. Residue Y134 is the Proton donor/acceptor of the active site. The Schiff-base intermediate with substrate role is filled by K162. V204 contributes to the pyruvate binding site.

Belongs to the DapA family. Homotetramer; dimer of dimers.

The protein localises to the cytoplasm. It carries out the reaction L-aspartate 4-semialdehyde + pyruvate = (2S,4S)-4-hydroxy-2,3,4,5-tetrahydrodipicolinate + H2O + H(+). Its pathway is amino-acid biosynthesis; L-lysine biosynthesis via DAP pathway; (S)-tetrahydrodipicolinate from L-aspartate: step 3/4. Catalyzes the condensation of (S)-aspartate-beta-semialdehyde [(S)-ASA] and pyruvate to 4-hydroxy-tetrahydrodipicolinate (HTPA). This chain is 4-hydroxy-tetrahydrodipicolinate synthase, found in Heliobacterium modesticaldum (strain ATCC 51547 / Ice1).